The sequence spans 228 residues: Glutamate transport system permease protein GluC (228 aa).

The next 4 membrane-spanning stretches (helical) occupy residues phenylalanine 16–isoleucine 36, leucine 64–alanine 84, alanine 100–isoleucine 120, and leucine 195–leucine 215. Residues phenylalanine 16–leucine 217 form the ABC transmembrane type-1 domain.

It belongs to the binding-protein-dependent transport system permease family. HisMQ subfamily. The complex is composed of two ATP-binding proteins (GluA), two transmembrane proteins (GluC and GluD) and a solute-binding protein (GluB).

The protein localises to the cell membrane. Functionally, part of the ABC transporter complex GluABCD involved in glutamate uptake. Probably responsible for the translocation of the substrate across the membrane. The sequence is that of Glutamate transport system permease protein GluC from Corynebacterium efficiens (strain DSM 44549 / YS-314 / AJ 12310 / JCM 11189 / NBRC 100395).